Here is a 535-residue protein sequence, read N- to C-terminus: Glutamate--cysteine ligase (535 aa).

Belongs to the glutamate--cysteine ligase type 1 family. Type 1 subfamily.

The enzyme catalyses L-cysteine + L-glutamate + ATP = gamma-L-glutamyl-L-cysteine + ADP + phosphate + H(+). The protein operates within sulfur metabolism; glutathione biosynthesis; glutathione from L-cysteine and L-glutamate: step 1/2. The protein is Glutamate--cysteine ligase of Pseudomonas syringae pv. syringae (strain B728a).